A 158-amino-acid polypeptide reads, in one-letter code: NAD(P)H-quinone oxidoreductase subunit J, chloroplastic (158 aa).

It belongs to the complex I 30 kDa subunit family. As to quaternary structure, NDH is composed of at least 16 different subunits, 5 of which are encoded in the nucleus.

It is found in the plastid. Its subcellular location is the chloroplast thylakoid membrane. The catalysed reaction is a plastoquinone + NADH + (n+1) H(+)(in) = a plastoquinol + NAD(+) + n H(+)(out). It catalyses the reaction a plastoquinone + NADPH + (n+1) H(+)(in) = a plastoquinol + NADP(+) + n H(+)(out). Functionally, NDH shuttles electrons from NAD(P)H:plastoquinone, via FMN and iron-sulfur (Fe-S) centers, to quinones in the photosynthetic chain and possibly in a chloroplast respiratory chain. The immediate electron acceptor for the enzyme in this species is believed to be plastoquinone. Couples the redox reaction to proton translocation, and thus conserves the redox energy in a proton gradient. The chain is NAD(P)H-quinone oxidoreductase subunit J, chloroplastic from Eucalyptus globulus subsp. globulus (Tasmanian blue gum).